The chain runs to 212 residues: Ribosomal RNA small subunit methyltransferase G (212 aa).

S-adenosyl-L-methionine-binding positions include glycine 73, 127-128 (IE), and arginine 143.

Belongs to the methyltransferase superfamily. RNA methyltransferase RsmG family.

It is found in the cytoplasm. It catalyses the reaction guanosine(527) in 16S rRNA + S-adenosyl-L-methionine = N(7)-methylguanosine(527) in 16S rRNA + S-adenosyl-L-homocysteine. Specifically methylates the N7 position of guanine in position 527 of 16S rRNA. In Methylobacterium nodulans (strain LMG 21967 / CNCM I-2342 / ORS 2060), this protein is Ribosomal RNA small subunit methyltransferase G.